The primary structure comprises 141 residues: Transcription antitermination protein NusB (141 aa).

It belongs to the NusB family.

Its function is as follows. Involved in transcription antitermination. Required for transcription of ribosomal RNA (rRNA) genes. Binds specifically to the boxA antiterminator sequence of the ribosomal RNA (rrn) operons. The polypeptide is Transcription antitermination protein NusB (Treponema pallidum (strain Nichols)).